Here is a 606-residue protein sequence, read N- to C-terminus: MEAVIKAFLTGYPGKTSKKDSKEKPLATSKKDPEKTPLLPTRVNYILIIGVLVLCEVTGVRADVHLLEQPGNLWITWANRTGQTDFCLSTQSATSPFQTCLIGIPSPISEGDFKGYVSDNCTTLGTDRLVSSADFTGGPDNSTTLTYRKVSCLLLKLNVSMWDEPHELQLLGSQSLPNITNIAQISGITGGCVGFRPQGVPWYLGWSRQEATRFLLRHPSFSKSTEPFTVVTADRHNLFMGSEYCGAYGYRFWNMYNCSQVGRQYRCGNARSPRPGLPEIQCTRRGGKWVNQSQEINESEPFSFTVNCTASSLGNASGCCGKAGTILPGKWVDSTQGSFTKPKALPPAIFLICGDRAWQGIPSRPVGGPCYLGKLTMLAPKHTDILKVLVNSSRTGIRRKRSTSHLDDTCSDEVQLWGPTARIFASILAPGVARAQALREIERLACWSVKQANLTTSFLGDLLDDVTSIRHAVLQNRAAIDFLLLAHGHGCEDVAGMCCFNLSDHSESIQKKFQLMKEHVNKIGVDSDPIGSWLRGLFGGIGEWAVHLLKGLLLGLVVILLLVVCLPCLLQIVCGNIRKMINNSISYHTEYKKLQKACGQPESRIV.

The first 62 residues, 1–62 (MEAVIKAFLT…VLCEVTGVRA (62 aa)), serve as a signal peptide directing secretion. Residues 63 to 552 (DVHLLEQPGN…EWAVHLLKGL (490 aa)) are Extracellular-facing. N-linked (GlcNAc...) asparagine; by host glycosylation is found at N79, N120, N141, N158, and N178. 7 cysteine pairs are disulfide-bonded: C87-C499, C121-C152, C192-C245, C258-C267, C353-C370, C410-C446, and C491-C498. The segment at 185–226 (ISGITGGCVGFRPQGVPWYLGWSRQEATRFLLRHPSFSKSTE) is binding to host receptor. N257 carries N-linked (GlcNAc...) asparagine; by host glycosylation. Residues 261–288 (VGRQYRCGNARSPRPGLPEIQCTRRGGK) form a binding to host receptor region. N-linked (GlcNAc...) asparagine; by host glycans are attached at residues N291, N297, N307, and N315. N391 carries an N-linked (GlcNAc...) asparagine; by host glycan. Positions 418 to 438 (GPTARIFASILAPGVARAQAL) are fusion peptide. Residues 435-485 (AQALREIERLACWSVKQANLTTSFLGDLLDDVTSIRHAVLQNRAAIDFLLL) are a coiled coil. N453 carries an N-linked (GlcNAc...) asparagine; by host glycan. The interval 474–490 (LQNRAAIDFLLLAHGHG) is immunosuppression. N501 carries an N-linked (GlcNAc...) asparagine; by host glycan. Positions 503 to 533 (SDHSESIQKKFQLMKEHVNKIGVDSDPIGSW) form a coiled coil. The helical transmembrane segment at 553–573 (LLGLVVILLLVVCLPCLLQIV) threads the bilayer. S-palmitoyl cysteine; by host attachment occurs at residues C565 and C568. At 574–606 (CGNIRKMINNSISYHTEYKKLQKACGQPESRIV) the chain is on the cytoplasmic side.

Belongs to the Alpharetroviruses envelope glycoprotein family. In terms of assembly, heterodimer with the transmembrane protein. The mature envelope protein (Env) consists of a trimer of SU-TM heterodimers attached by a labile interchain disulfide bond. Interacts with the host cell entry receptor TVA isoforms pg900 and pg800; this interaction allows the viral attachment. Heterodimer with the surface protein. The mature envelope protein (Env) consists of a trimer of SU-TM heterodimers attached by a labile interchain disulfide bond. Post-translationally, specific enzymatic cleavages in vivo yield mature proteins. Envelope glycoproteins are synthesized as an inactive precursor that is N-glycosylated and processed likely by host cell furin or by a furin-like protease in the Golgi to yield the mature SU and TM proteins. The cleavage site between SU and TM requires the minimal sequence [KR]-X-[KR]-R. The transmembrane protein is palmitoylated. Palmitoylation is necessary for glycoprotein function and infectivity.

It is found in the virion membrane. The protein resides in the host cell membrane. Functionally, the surface protein (SU) attaches the virus to the host cell entry receptor TVA. This interaction triggers the refolding of the transmembrane protein (TM) thereby unmasking its fusion peptide and the formation of a reactive thiolate on Cys-100 to activate its fusogenic potential. Fusion occurs at the host cell plasma membrane. In terms of biological role, the transmembrane protein (TM) acts as a class I viral fusion protein. Under the current model, the protein has at least 3 conformational states: pre-fusion native state, pre-hairpin intermediate state, and post-fusion hairpin state. During viral and target cell membrane fusion, the coiled coil regions (heptad repeats) assume a trimer-of-hairpins structure, positioning the fusion peptide in close proximity to the C-terminal region of the ectodomain. The formation of this structure appears to drive apposition and subsequent fusion of viral and target cell membranes. Membranes fusion leads to delivery of the nucleocapsid into the cytoplasm. This is Envelope glycoprotein gp95 (env) from Avian leukosis virus subgroup A (isolate RSA) (ALV-A RSA).